A 505-amino-acid polypeptide reads, in one-letter code: Enhancer of mRNA-decapping protein 3 (505 aa).

A Sm domain is found at 1-68 (MAADWLGSIV…ISELKILEIP (68 aa)). The interval 1–79 (MAADWLGSIV…ESLKYTSDQL (79 aa)) is required for P-body targeting and interaction with DCP1A. Disordered stretches follow at residues 84–181 (TGFG…QLKA) and 219–243 (THER…TYRH). 3 stretches are compositionally biased toward polar residues: residues 91–113 (TRQQ…QNIP), 122–132 (EPSSTSPQPCS), and 155–177 (SLGS…TKNG). A required for interaction with DDX6 region spans residues 186 to 293 (CFGDELEEIP…HKKLLCVAEK (108 aa)). One can recognise a DFDF domain in the interval 187–223 (FGDELEEIPDTDFDFEGNLALFDKAAVFEEIDTHERR). In terms of domain architecture, YjeF N-terminal spans 280 to 484 (SYVLHKKLLC…DIGIPQKVFR (205 aa)).

The protein belongs to the EDC3 family.

It is found in the cytoplasm. The protein resides in the P-body. Binds single-stranded RNA. Involved in the process of mRNA degradation and in the positive regulation of mRNA decapping. This chain is Enhancer of mRNA-decapping protein 3 (edc3), found in Xenopus laevis (African clawed frog).